We begin with the raw amino-acid sequence, 428 residues long: Beta-1,3-galactosyl-O-glycosyl-glycoprotein beta-1,6-N-acetylglucosaminyltransferase (428 aa).

At 1–9 the chain is on the cytoplasmic side; the sequence is MLRNLFRRR. Residues 5–9 are mediates interaction with GOLPH3 and is necessary and sufficient for localization to the Golgi; sequence LFRRR. Residues 10–32 form a helical; Signal-anchor for type II membrane protein membrane-spanning segment; that stretch reads LFSCPTKYYFMLLVLSLITFSVL. The interval 33–121 is stem region; sequence RIHQKPEFFS…EPLTKEEVGF (89 aa). The Lumenal portion of the chain corresponds to 33 to 428; it reads RIHQKPEFFS…RHKALENLEH (396 aa). N-linked (GlcNAc...) asparagine glycosylation is found at asparagine 58 and asparagine 95. Disulfide bonds link cysteine 59-cysteine 413, cysteine 100-cysteine 172, cysteine 151-cysteine 199, and cysteine 372-cysteine 381. The segment at 122–428 is catalytic; the sequence is PIAYSIVVHH…RHKALENLEH (307 aa). UDP-N-acetyl-alpha-D-glucosamine-binding positions include 128–130, 155–157, and tyrosine 187; these read VVH and DRK. Residues glutamate 243, asparagine 250, lysine 251, arginine 254, glutamate 320, lysine 341, and tyrosine 358 each contribute to the a glycoprotein site. The active-site Nucleophile is glutamate 320. UDP-N-acetyl-alpha-D-glucosamine is bound by residues arginine 378 and lysine 401.

This sequence belongs to the glycosyltransferase 14 family. In terms of assembly, interacts with GOLPH3; may control GCNT1 retention in the Golgi. In terms of processing, N-glycosylated. In terms of tissue distribution, expressed in kidney, liver, stomach, spleen, lung and brain.

It localises to the golgi apparatus membrane. The enzyme catalyses a 3-O-[beta-D-galactosyl-(1-&gt;3)-N-acetyl-alpha-D-galactosaminyl]-L-seryl-[protein] + UDP-N-acetyl-alpha-D-glucosamine = 3-O-{beta-D-galactosyl-(1-&gt;3)-[N-acetyl-beta-D-glucosaminyl-(1-&gt;6)]-N-acetyl-alpha-D-galactosaminyl}-L-seryl-[protein] + UDP + H(+). The catalysed reaction is a 3-O-[beta-D-galactosyl-(1-&gt;3)-N-acetyl-alpha-D-galactosaminyl]-L-threonyl-[protein] + UDP-N-acetyl-alpha-D-glucosamine = a 3-O-{beta-D-galactosyl-(1-&gt;3)-[N-acetyl-beta-D-glucosaminyl-(1-&gt;6)]-N-acetyl-alpha-D-galactosaminyl}-L-threonyl-[protein] + UDP + H(+). It catalyses the reaction a globoside GalGb4Cer + UDP-N-acetyl-alpha-D-glucosamine = a globoside GlcNAc-(beta1-&gt;6)-GalGb4Cer + UDP + H(+). It carries out the reaction a ganglioside GA1 + UDP-N-acetyl-alpha-D-glucosamine = a ganglioside beta-D-GlcNAc-(1-&gt;6)-GA1 + UDP + H(+). The protein operates within protein modification; protein glycosylation. Its pathway is glycolipid biosynthesis. Inactivated by thiol-reactive agents. Inhibited by free UDP. Functionally, glycosyltransferase that catalyzes the transfer of an N-acetylglucosamine (GlcNAc) moiety in beta1-6 linkage from UDP-GlcNAc onto mucin-type core 1 O-glycan to form the branched mucin-type core 2 O-glycan. The catalysis is metal ion-independent and occurs with inversion of the anomeric configuration of sugar donor. Selectively involved in synthesis of mucin-type core 2 O-glycans that serve as scaffolds for the display of selectin ligand sialyl Lewis X epitope by myeloid cells, with an impact on homeostasis and recruitment to inflammatory sites. Can also act on glycolipid substrates. Transfers GlcNAc moiety to GalGb4Cer globosides in a reaction step to the synthesis of stage-specific embryonic antigen 1 (SSEA-1) determinant. Can use Galbeta1-3GalNAcalpha1-R and Galbeta1-3GalNAcbeta1-R oligosaccharide derivatives as acceptor substrates. The polypeptide is Beta-1,3-galactosyl-O-glycosyl-glycoprotein beta-1,6-N-acetylglucosaminyltransferase (Gcnt1) (Mus musculus (Mouse)).